A 283-amino-acid chain; its full sequence is Probable endonuclease 4 (283 aa).

Residues H69, H113, E148, D182, H185, H217, D230, H232, and E262 each contribute to the Zn(2+) site.

It belongs to the AP endonuclease 2 family. Zn(2+) serves as cofactor.

The catalysed reaction is Endonucleolytic cleavage to 5'-phosphooligonucleotide end-products.. In terms of biological role, endonuclease IV plays a role in DNA repair. It cleaves phosphodiester bonds at apurinic or apyrimidinic (AP) sites, generating a 3'-hydroxyl group and a 5'-terminal sugar phosphate. The sequence is that of Probable endonuclease 4 from Bifidobacterium longum (strain DJO10A).